The primary structure comprises 227 residues: Lipoprotein-releasing system ATP-binding protein LolD (227 aa).

Residues L7–A227 enclose the ABC transporter domain. An ATP-binding site is contributed by G43–S50.

This sequence belongs to the ABC transporter superfamily. Lipoprotein translocase (TC 3.A.1.125) family. The complex is composed of two ATP-binding proteins (LolD) and two transmembrane proteins (LolC and LolE).

The protein resides in the cell inner membrane. Functionally, part of the ABC transporter complex LolCDE involved in the translocation of mature outer membrane-directed lipoproteins, from the inner membrane to the periplasmic chaperone, LolA. Responsible for the formation of the LolA-lipoprotein complex in an ATP-dependent manner. This Pseudomonas syringae pv. tomato (strain ATCC BAA-871 / DC3000) protein is Lipoprotein-releasing system ATP-binding protein LolD.